The sequence spans 109 residues: ATP-dependent Clp protease adapter protein ClpS (109 aa).

The segment at 1–25 (MSERKEGDSGAGVRSAVITQTKPKT) is disordered.

It belongs to the ClpS family. Binds to the N-terminal domain of the chaperone ClpA.

In terms of biological role, involved in the modulation of the specificity of the ClpAP-mediated ATP-dependent protein degradation. This chain is ATP-dependent Clp protease adapter protein ClpS, found in Phenylobacterium zucineum (strain HLK1).